The chain runs to 1133 residues: MAYPELDAADFLQQLARRKEFKSLISPPVDQKELIRDLRAHFVQIGGPGCEKGGRAFFPCDPYASPFPSIKGLQLHNAQLFVQNFQNPNTPYSRLLLNWQTGTGKSIAAIAIARQFMNHYMNFIENAPWIFVVGFTRAIIQTEMLRRPELGFVSYKEVAELHRLLHIAKQSGSTTSVESRHLNGFVSTLKRRLTDRNRGGFFQFYGYKEFASKLFNITSKGEEKNFDVLSLFHRSDEAEDTLNENDISQFVQKISEAETNGLIRVNQKIMEQLRGGLLIADEIHNVYNIQERNNYGIALQYVLDAFPPHQAPRAVFMSATPVTGSVMEYVDLLNLLVPRHELPNGQPLQRQQLFDSSGHSVKWKKDALALVERLSTGRVSFLLDTNTNFYPERIFAGKMLSYKDETLPYLHFIECPMSEYQLETLKQLGPDPKISSNAYSIYDMVFPNPKFSKQTEPKAYGLFNSTETPTALSMASTDWLLENGVQIIEPSRRAPFNVSGSFLSLQPPTHISGLAFYSGKYTQMMKDILSIIRQGRGKILIYHNRVRMSGVLILQEILQSNGILNEVSSPVGTTRCSICAAIRDEHTHSDHQFIPVRFTILHSEIEPAVRERSLALFNASSNLEGHQLRILIGSKVIVEGLNFQAVRYEMIMSLPLDIPRLIQVFGRVVRKNSHMELPPSERNVTIYLYVSTTPDGGPELAKYAQKLKEYILIQEGDKALRKHAIDGFTNQIKIDKPMLESLPLSPSITPANVGATVLNTFEAYGYGEQEVKTISNIIISLFMARPVWTYSELWKAVSTPKLIQGITIDNKLFSEDNFALALISLCYSKNQCKELWIQNRLCTIMHVPAKPEHLYVAAVLNHKKEPVLDIETYIRDFQLPAMHSIRITKYLEHSQTKEPFQVLYEKFQKDFQDEPMEQVLIHYPASFHYTMLEALIIDNLAGMGALVEVYKKFFIAFSKKDIQPFPDIFKIISHVPGDDNTLVGYATEDSVRLITSREDKTWHEIPLYMLNINVKRKENDIVIGYMESKGKALKFKIRPPIQVLKKNEITDIRMLNRGAVCETRGREEQQKIADQLGISLNLTKISAIKLCLLIRNNLLQKEMEARNQPNGMQDGIRWFYLFNDKMPSLVHTS.

The region spanning 52–352 is the Helicase ATP-binding domain; it reads KGGRAFFPCD…PNGQPLQRQQ (301 aa). 99–106 contributes to the ATP binding site; that stretch reads WQTGTGKS. Positions 281–284 match the DEAH box motif; the sequence is DEIH. The 201-residue stretch at 524–724 folds into the Helicase C-terminal domain; it reads MMKDILSIIR…EGDKALRKHA (201 aa).

This sequence belongs to the DEAD box helicase family. DEAH subfamily.

The protein localises to the virion. The catalysed reaction is ATP + H2O = ADP + phosphate + H(+). In terms of biological role, putative initation factor. This Ornithodoros (relapsing fever ticks) protein is Early transcription factor large subunit homolog.